Consider the following 562-residue polypeptide: Probable malate:quinone oxidoreductase (562 aa).

Residues 530–562 (EVPDKSATPTDPTIAPKHQHSTTHNANSEMQAL) are disordered. Polar residues predominate over residues 551–562 (TTHNANSEMQAL).

Belongs to the MQO family. FAD is required as a cofactor.

It carries out the reaction (S)-malate + a quinone = a quinol + oxaloacetate. It functions in the pathway carbohydrate metabolism; tricarboxylic acid cycle; oxaloacetate from (S)-malate (quinone route): step 1/1. The chain is Probable malate:quinone oxidoreductase from Xylella fastidiosa (strain M12).